The primary structure comprises 3242 residues: tRNA nuclease CdiA (3242 aa).

Residues 1–32 (MHQPPVRFTYRLLSYLISTIIAGQPLLPAVGA) form the signal peptide. The two-partner system transport domain (TPS) stretch occupies residues 36–322 (PQNGAGMDKA…AGGNLSVTGT (287 aa)). Residues 351–1376 (GELTAGQNAM…IVVRTGHLLN (1026 aa)) form an FHA-1 region. Residues 1377–1668 (QREGFSATTT…TGQTGISDDW (292 aa)) are receptor-binding domain (RBD). Positions 1668–1852 (WPLPSGNNGY…LSPEDITLHN (185 aa)) are YP domain. The segment at 1853-1913 (GSVISGNNVQ…DLSAIGDISN (61 aa)) is periplasmic FHA-1 repeat (pFR). Residues 2021–2631 (DNSASSTTSQ…TSKYDSKQTS (611 aa)) are FHA-2. A compositionally biased stretch (basic and acidic residues) spans 2075-2091 (RESKNSRNGRSESHESH). 3 disordered regions span residues 2075–2094 (RESKNSRNGRSESHESHAAV), 2310–2333 (GSSKTTHDRREAGTTQSQSASTIG), and 2439–2481 (TMAS…NAGN). The span at 2322–2333 (GTTQSQSASTIG) shows a compositional bias: polar residues. Residues 2969-3242 (GVDPSKLTED…IESALKGYGI (274 aa)) form a DUF638-CT domain; not toxic when added to the outside of E.coli, does not interfere with F-pilus mediated conjugation, toxic when expressed intracellularly region. A pre-toxin (PT) domain region spans residues 2972–3015 (PSKLTEDQKQTVSTLATLSAGMAGGIASGDVAGAAAGAGAGKNV). The short motif at 3016–3019 (VENN) is the VENN CT cleavage motif element. Residues 3016–3097 (VENNALSLVA…KYLSSLHDKY (82 aa)) form a toxin import domain; sufficient to import the tRNA nuclease domain of colicin E5 into E.coli, may bind F-pili region. The segment at 3016 to 3242 (VENNALSLVA…IESALKGYGI (227 aa)) is CT domain; toxic when added to the outside of E.coli and when expressed intracellularly. Positions 3020-3141 (ALSLVARGCA…SENDPKQQNE (122 aa)) are inner membrane translocation domain (IMTD), targets protein to FtsH. Residues 3020 to 3242 (ALSLVARGCA…IESALKGYGI (223 aa)) are C-terminal effector domain (CT). Residues 3098 to 3242 (GSGAASNPNI…IESALKGYGI (145 aa)) form a tRNase function, does not interfere with F-pilus mediated conjugation region. The disordered stretch occupies residues 3116-3146 (KVELGGSGSGTGTPPPSENDPKQQNEKTVDK). The span at 3134-3146 (NDPKQQNEKTVDK) shows a compositional bias: basic and acidic residues. The stretch at 3137 to 3238 (KQQNEKTVDK…AINKIESALK (102 aa)) forms a coiled coil. Active-site residues include D3170, H3193, and E3196.

This sequence in the N-terminal section; belongs to the CdiA toxin family. As to quaternary structure, the C-terminal (CT) domain interacts with cognate CdiI but not non-cognate CdiI from D.dadantii strain 3937. CdiA-CT also interacts with CysK; this is blocked upon preincubation with O-acetyl-L-serine. CysK forms a complex with CdiA-CT/CdiI. One CdiA toxin subunit binds to each subunit of the CysK homodimer, and one CdiI immunity protein binds to each toxin subunit; the immune complex is thus a dimer of trimers. The 4 C-terminal residues of CdiA fit into the active site of CysK. A divalent metal cation serves as cofactor.

The protein localises to the secreted. Its subcellular location is the target cell membrane. The protein resides in the target cell. It is found in the target cell cytoplasm. Functionally, toxic component of a toxin-immunity protein module, which functions as a cellular contact-dependent growth inhibition (CDI) system. CDI modules allow bacteria to communicate with and inhibit the growth of closely related neighboring bacteria in a contact-dependent fashion (target cell counts decrease 100- to 1000-fold). CdiA toxicity is neutralized by its cognate immunity protein CdiI, but not by CdiI from other bacteria. Uses heterotrimeric OmpC and OmpF as target cell outer membrane receptors; receptor function depends on polymorphisms in extracellular loops L4 and L5 of OmpC; interacts with itself and closely related bacteria but also with OmpC from E.cloacae ATCC 13047. Its ability to preferentially bind to 'self' receptors suggests it may also play a role in self-recognition and kin selection. A bamA mutation that decreases its expression about 5-fold is partially resistant to this strain of CdiA, probably due to decreased outer membrane receptor protein assembly. Isolated CdiA-CT is imported in an F-pilus-mediated fashion; CdiA-CT inhibits F-mediated conjugation, probably via its N-terminus (residues 3016-3097), although it is not clear if this is physiologically significant. Gains access to the cytoplasm of target cells by using integral inner membrane protein FtsH. The C-terminal domain (CT) cleaves within tRNA anticodon loops; this activity is inhibited by cognate CdiI. tRNase activity of CdiA-CT is stimulated by CysK, although the extreme C-terminus (residues 3098-3242) has tRNase activity in the absence of CysK. In vivo CDI toxicity requires CysK. CysK stabilizes CdiA-CT, allowing it to bind tRNA substrate; neither CdiA-CT nor CysK bind tRNA alone in vitro. Purified CdiA-CT (residues 3016-3242) inhibits E.coli cell growth when added to cultures alone or in complex with cognate CdiI, growth is inhibited when cognate CdiI is present within the cell but not when a CdiA-CT/CdiI complex is added extracellularly, suggesting CdiA-CT alone but not the CdiA-CT/CdiI complex is imported into the target cell. The CdiA protein is thought to be exported from the cell through the central lumen of CdiB, the other half of its two-partner system (TPS). The TPS domain probably remains associated with CdiB while the FHA-1 domain forms an extended filament with the receptor-binding domain (RBD) at its extremity; in the secretion arrested state the C-terminus of the RBD and YP domains form a hairpin-like structure as the FHA-2, PT and CT domains are periplasmic. The YP domain is probably responsible for this arrest at the point where it re-enters the host cell periplasm. Upon binding to a target cell outer membrane receptor (heterotrimeric OmpC-OmpF for this CDI) a signal is transmitted to activate secretion. The filament elongates slightly, the rest of CdiA is secreted and the FHA-2 domain becomes stably associated with the target cell's outer membrane where it facilitates entry of the toxic CT domain into the target cell periplasm. From there the toxic CT domain is cleaved and gains access to the target cell cytoplasm via an inner membrane protein (FtsH for this CDI). This Escherichia coli O6:K15:H31 (strain 536 / UPEC) protein is tRNA nuclease CdiA.